An 872-amino-acid polypeptide reads, in one-letter code: Leucine--tRNA ligase (872 aa).

The 'HIGH' region motif lies at 42–52 (PYPSGSLHMGH). A 'KMSKS' region motif is present at residues 634–638 (TMSKS). Lys637 contacts ATP.

It belongs to the class-I aminoacyl-tRNA synthetase family.

It localises to the cytoplasm. It carries out the reaction tRNA(Leu) + L-leucine + ATP = L-leucyl-tRNA(Leu) + AMP + diphosphate. The chain is Leucine--tRNA ligase from Trichormus variabilis (strain ATCC 29413 / PCC 7937) (Anabaena variabilis).